The sequence spans 664 residues: MAAVGPPQQQVRMAHQQVWAALEVALRVPCLYIIDAIFNSYPDSSQSRFCIVLQIFLRLFGVFASSIVLILSQRSLFKFYTYSSAFLLAATSVLVNYYASLHIDFYGAYNTSAFGIELLPRKGPSLWMALIVLQLTFGIGYVTLLQIHSIYSQLIILDLLVPVIGLITELPLHIRETLLFTSSLILTLNTVFVLAVKLKWFYYSTRYVYLLVRHMYRIYGLQLLMEDTWKRIRFPDILRVFWLTRVTAQATVLMYILRMANETDSFFISWDDFWDLICNLIISGCDSTLTVLGMSAVISSVAHYLGLGILAFIGSTEEDDRRLGFVAPVLFFILALQTGLSGLRPEERLIRLSRNMCLLLTAVLHFIHGMTDPVLMSLSASHVSSFRRHFPVLFVSACLFILPVLLSYVLWHHYALNTWLFAVTAFCVELCLKVIVSLTVYTLFMIDGYYNVLWEKLDDYVYYVRSTGSIIEFIFGVVMFGNGAYTMMFESGSKIRAFMMCLHAYFNIYLQAKNGWKTFMNRRTAVKKINSLPEIKGSRLQEINDVCAICYHEFTTSARITPCNHYFHALCLRKWLYIQDTCPMCHQKVYIEDDIKDNSNVSNNNGFIPPNETPEEAVREAAAESDRELNEDDSTDCDDDVQRERNGVIQHTGAAAEEFNDDTD.

A2 is subject to N-acetylalanine. The next 12 helical transmembrane spans lie at 51–71, 85–105, 125–145, 154–174, 178–198, 293–313, 323–343, 356–376, 390–410, 420–440, 469–489, and 495–512; these read IVLQ…VLIL, AFLL…HIDF, SLWM…VTLL, LIIL…PLHI, LLFT…AVKL, GMSA…LAFI, LGFV…LSGL, MCLL…PVLM, FPVL…SYVL, LFAV…SLTV, SIIE…TMMF, and IRAF…YLQA. The RING-type; atypical zinc finger occupies 547-586; sequence CAICYHEFTTSARITPCNHYFHALCLRKWLYIQDTCPMCH. The tract at residues 601-664 is disordered; that stretch reads VSNNNGFIPP…AAEEFNDDTD (64 aa). Residues 616-628 show a composition bias toward basic and acidic residues; that stretch reads EAVREAAAESDRE. Over residues 629–639 the composition is skewed to acidic residues; the sequence is LNEDDSTDCDD. S634 is modified (phosphoserine). Residues T635 and T663 each carry the phosphothreonine modification.

In terms of assembly, interacts with MHC class I and HM13. Interacts with VHL. Component of SCAP-SREBP complex composed of SREBF2, SCAP and RNF139; the complex hampers the interaction between SCAP and SEC24B, thereby reducing SREBF2 proteolytic processing. Interacts with SREBF2 (via C-terminal domain). Interacts with SCAP; the interaction inhibits the interaction of SCAP with SEC24B and hampering the ER to Golgi transport of the SCAP-SREBP complex. Interacts with SEC24B. Interacts with INSIG1 and INSIG2. Interacts with EIF3F and EIF3H; the interaction leads to protein translation inhibitions in a ubiquitination-dependent manner. Interacts with XBP1 isoform 1; the interaction induces ubiquitination and degradation of XBP1 isoform 1. Interacts with AUP1, AMFR and UBE2G2; interaction with AUP1 facilitates interaction of RNF139 with ubiquitin-conjugating enzyme UBE2G2 and ubiquitin ligase AMFR/gp78, leading to sterol-induced ubiquitination of HMGCR and its subsequent proteasomal degradation. In terms of processing, autoubiquitinated. Ubiquitination is induced by sterol and leads to ist degradation via the ubiquitin-proteasome pathway. As to expression, highly expressed in testis, placenta and adrenal gland. Moderate expression in heart, brain, liver, skeletal muscle and pancreas, and low expression in lung and kidney.

It is found in the endoplasmic reticulum membrane. It carries out the reaction S-ubiquitinyl-[E2 ubiquitin-conjugating enzyme]-L-cysteine + [acceptor protein]-L-lysine = [E2 ubiquitin-conjugating enzyme]-L-cysteine + N(6)-ubiquitinyl-[acceptor protein]-L-lysine.. Its pathway is protein modification; protein ubiquitination. Its function is as follows. E3-ubiquitin ligase; acts as a negative regulator of cell proliferation through mechanisms involving G2/M arrest and cell death. Required for MHC class I ubiquitination in cells expressing the cytomegalovirus protein US2 before dislocation from the endoplasmic reticulum (ER). Affects SREBP processing by hindering the SREBP-SCAP complex translocation from the ER to the Golgi, thereby reducing SREBF2 target gene expression. Involved in the sterol-accelerated degradation of HMGCR. This is achieved through binding of RNF139 to INSIG1 and/or INSIG2 at the ER membrane. In addition, interaction of RNF139 with AUP1 facilitates interaction of RNF139 with ubiquitin-conjugating enzyme UBE2G2 and ubiquitin ligase AMFR, leading to ubiquitination of HMGCR. The ubiquitinated HMGCR is then released from the ER into the cytosol for subsequent destruction. Required for INSIG1 ubiquitination. May be required for EIF3 complex ubiquitination. The polypeptide is E3 ubiquitin-protein ligase RNF139 (Homo sapiens (Human)).